A 2774-amino-acid polypeptide reads, in one-letter code: Teneurin-2 (2774 aa).

Residues 1-375 form the Teneurin N-terminal domain; that stretch reads MDVKDRRHRS…KPSKYCSWKC (375 aa). The Cytoplasmic segment spans residues 1 to 379; sequence MDVKDRRHRS…YCSWKCAALS (379 aa). Phosphoserine is present on residues Ser90 and Ser124. The segment at 111-271 is disordered; sequence TGSDADSDTE…HHHSSANSLN (161 aa). The span at 141–155 shows a compositional bias: polar residues; it reads SSGLSSRENSALTLT. Thr155 bears the Phosphothreonine mark. Phosphoserine is present on Ser157. Over residues 159–168 the composition is skewed to basic and acidic residues; sequence NENKSDDDNG. Residues 174 to 188 show a composition bias toward low complexity; sequence TSSSSLLPSAQLPSS. Residues 202–211 are compositionally biased toward polar residues; the sequence is DSNTSHQIMD. The span at 229 to 240 shows a compositional bias: low complexity; it reads SGPQQASSSGPP. A helical transmembrane segment spans residues 380–400; the sequence is AIAAALLLAILLAYFIAMHLL. Over 401–2774 the chain is Extracellular; sequence GLNWQLQPAD…FLRQNEMGKR (2374 aa). 2 N-linked (GlcNAc...) asparagine glycosylation sites follow: Asn443 and Asn482. EGF-like domains lie at 575 to 603, 605 to 634, 636 to 668, 669 to 701, 702 to 735, 738 to 766, 769 to 797, and 808 to 841; these read DCPRNCHGNGECVSGLCHCFPGFLGADCA, AACPVLCSGNGQYSKGTCQCYSGWKGAECD, PMNQCIDPSCGGHGSCIDGNCVCAAGYKGEHCE, EVDCLDPTCSSHGVCVNGECLCSPGWGGLNCEL, ARVQCPDQCSGHGTYLPDSGLCNCDPNWMGPDCS, VCSVDCGTHGVCIGGACRCEEGWTGAACD, VCHPRCIEHGTCKDGKCECREGWNGEHCT, and DGCPDLCNGNGRCTLGQNSWQCVCQTGWRGPGCN. Disulfide bonds link Cys576–Cys586, Cys580–Cys591, Cys593–Cys602, Cys611–Cys622, Cys624–Cys633, Cys640–Cys651, Cys645–Cys656, Cys658–Cys667, Cys672–Cys683, Cys677–Cys688, Cys690–Cys699, Cys710–Cys723, Cys725–Cys734, Cys739–Cys749, Cys743–Cys754, Cys756–Cys765, Cys770–Cys780, Cys774–Cys785, Cys787–Cys796, Cys810–Cys820, Cys814–Cys829, and Cys831–Cys840. Residues Asn925, Asn948, and Asn1267 are each glycosylated (N-linked (GlcNAc...) asparagine). 5 NHL repeats span residues 1272-1316, 1342-1386, 1401-1452, 1474-1501, and 1530-1573; these read LELR…VKSL, ARCG…NGII, LSCD…IAGR, LESASAIAISHTGVLYITETDEKKINRL, and CYSG…VSKN. A YD 1 repeat occupies 1583 to 1602; sequence YEAASPGEQELYVFNADGIH. Asn1616 carries an N-linked (GlcNAc...) asparagine glycan. YD repeat units lie at residues 1619-1639, 1682-1701, and 1702-1724; these read YSADNDVTELIDNNGNSLKIR, YDGNTGLLATKSDETGWTTF, and YDYDHEGRLTNVTRPTGVVTSLH. N-linked (GlcNAc...) asparagine glycans are attached at residues Asn1712, Asn1749, Asn1773, Asn1807, and Asn1892. YD repeat units lie at residues 1895–1914, 1936–1954, 1955–1975, 1982–1999, 2000–2021, 2022–2039, 2042–2062, 2065–2085, 2093–2113, 2119–2136, 2137–2163, 2165–2178, 2179–2202, 2205–2225, 2226–2246, 2248–2268, 2280–2300, and 2302–2322; these read YFFNGRLAGLQRGAMSERTD, YLDKSMVLLLQSQRQYIFE, YDSSDRLHAVTMPSVARHSMS, YIRNIYNPPESNASVIFD, YSDDGRILKTSFLGTGRQVFYK, YGKLSKLSEIVYDSTAVT, YDETTGVLKMVNLQSGGFSCT, YRKVGPLVDKQIYRFSEEGMI, YHDNSFRIASIKPVISETPLP, YDEISGKVEHFGKFGVIY, YDINQIITTAVMTLSKHFDTHGRIKEV, YEMFRSLMYWMTVQ, YDSMGRVIKRELKLGPYANTTKYT, YDGDGQLQSVAVNDRPTWRYS, YDLNGNLHLLNPGNSARLMPL, YDLRDRITRLGDVQYKIDDDG, YNSKGLLTRAYNKASGWSVQY, and YDGVSRRASYKTNLGHHLQYF. N-linked (GlcNAc...) asparagine glycosylation is present at Asn1993. An N-linked (GlcNAc...) asparagine glycan is attached at Asn2197. Asn2337 carries an N-linked (GlcNAc...) asparagine glycan. Residues 2348 to 2389 form a YD 23 repeat; the sequence is YDLQGHLFAMESSSGEEYYVASDNTGTPLAVFSINGLMIKQL. N-linked (GlcNAc...) asparagine glycosylation occurs at Asn2648.

It belongs to the tenascin family. Teneurin subfamily. As to quaternary structure, homodimer; disulfide-linked. Heterodimer with either TENM1 or TENM3. May also form heterodimer with TENM4. Interacts with ADGRL1 isoform 2. Post-translationally, derives from the membrane form by proteolytic processing. In terms of processing, derives from the plasma membrane form by proteolytic cleavage and translocates to the nucleus. Homophilic binding of the C-terminal extracellular domain stimulates its proteolytic cleavage and release in the cytoplasmic. Is subjected to rapid degradation by the proteasome pathway. As to expression, expressed in the brain (at protein level).

Its subcellular location is the cell membrane. The protein localises to the presynaptic cell membrane. The protein resides in the postsynaptic cell membrane. It is found in the endoplasmic reticulum. It localises to the golgi apparatus. Its subcellular location is the synapse. The protein localises to the cell projection. The protein resides in the dendritic spine. It is found in the filopodium. It localises to the growth cone. Its subcellular location is the nucleus. The protein localises to the PML body. Functionally, involved in neural development, regulating the establishment of proper connectivity within the nervous system. Acts as a ligand of the ADGRL1 and ADGRL3 receptors that are expressed at the surface of adjacent cells. Promotes the formation of filopodia and enlarged growth cone in neuronal cells. Mediates axon guidance and homophilic and heterophilic cell-cell adhesion. May function as a cellular signal transducer. In terms of biological role, induces gene transcription inhibition. The protein is Teneurin-2 (Tenm2) of Rattus norvegicus (Rat).